The chain runs to 432 residues: Succinate--CoA ligase [GDP-forming] subunit beta, mitochondrial (432 aa).

Residues 1–37 (MASPVAAQAGKLLRALALRPRFLAAGSQAVQLTSRRW) constitute a mitochondrion transit peptide. The 229-residue stretch at 46–274 (KKLMSDNGVR…NAEFRQKDIF (229 aa)) folds into the ATP-grasp domain. GTP is bound at residue glutamine 57. An N6-acetyllysine modification is found at lysine 73. At lysine 78 the chain carries N6-succinyllysine. 90–92 (GRG) lines the GTP pocket. 2 positions are modified to N6-acetyllysine: lysine 132 and lysine 139. Leucine 146 contacts GTP. Serine 161 carries the post-translational modification Phosphoserine. Lysine 200, lysine 218, and lysine 227 each carry N6-acetyllysine. Asparagine 243 and aspartate 257 together coordinate Mg(2+). N6-acetyllysine occurs at positions 271 and 291. Asparagine 308 is a substrate binding site. Lysine 338 carries the N6-succinyllysine modification. Lysine 347 carries the post-translational modification N6-acetyllysine. 365–367 (GIV) contributes to the substrate binding site. 2 positions are modified to N6-acetyllysine: lysine 386 and lysine 423.

The protein belongs to the succinate/malate CoA ligase beta subunit family. GTP-specific subunit beta subfamily. Heterodimer of an alpha and a beta subunit. The beta subunit determines specificity for GTP. Requires Mg(2+) as cofactor. In terms of tissue distribution, mainly expressed in liver, kidney, heart, spleen and skeletal muscle. Also found in intestine and colon, and in low amounts in lung, brain, prostate, testis and ovary.

Its subcellular location is the mitochondrion. The catalysed reaction is GTP + succinate + CoA = succinyl-CoA + GDP + phosphate. Its pathway is carbohydrate metabolism; tricarboxylic acid cycle; succinate from succinyl-CoA (ligase route): step 1/1. GTP-specific succinyl-CoA synthetase functions in the citric acid cycle (TCA), coupling the hydrolysis of succinyl-CoA to the synthesis of GTP and thus represents the only step of substrate-level phosphorylation in the TCA. The beta subunit provides nucleotide specificity of the enzyme and binds the substrate succinate, while the binding sites for coenzyme A and phosphate are found in the alpha subunit. The sequence is that of Succinate--CoA ligase [GDP-forming] subunit beta, mitochondrial from Homo sapiens (Human).